A 725-amino-acid polypeptide reads, in one-letter code: Catalase-peroxidase (725 aa).

The tryptophyl-tyrosyl-methioninium (Trp-Tyr) (with M-252) cross-link spans 98–226 (WHMAGSYRTS…LAAVQMGLIY (129 aa)). His99 serves as the catalytic Proton acceptor. The tryptophyl-tyrosyl-methioninium (Tyr-Met) (with W-98) cross-link spans 226–252 (YVNPEGVNGKSDPQATAYQMRETFARM). His267 contributes to the heme b binding site.

The protein belongs to the peroxidase family. Peroxidase/catalase subfamily. As to quaternary structure, homodimer or homotetramer. Heme b serves as cofactor. Formation of the three residue Trp-Tyr-Met cross-link is important for the catalase, but not the peroxidase activity of the enzyme.

It carries out the reaction H2O2 + AH2 = A + 2 H2O. The enzyme catalyses 2 H2O2 = O2 + 2 H2O. Bifunctional enzyme with both catalase and broad-spectrum peroxidase activity. In Paracoccus denitrificans (strain Pd 1222), this protein is Catalase-peroxidase.